Consider the following 102-residue polypeptide: Large ribosomal subunit protein uL24 (102 aa).

The tract at residues 44–65 (HAKPSQDNPQGGILNQEAPIHS) is disordered.

This sequence belongs to the universal ribosomal protein uL24 family. As to quaternary structure, part of the 50S ribosomal subunit.

Its function is as follows. One of two assembly initiator proteins, it binds directly to the 5'-end of the 23S rRNA, where it nucleates assembly of the 50S subunit. One of the proteins that surrounds the polypeptide exit tunnel on the outside of the subunit. The sequence is that of Large ribosomal subunit protein uL24 from Shouchella clausii (strain KSM-K16) (Alkalihalobacillus clausii).